The sequence spans 301 residues: 1,5-anhydro-D-fructose reductase (301 aa).

An NADP(+)-binding site is contributed by D35. Residue Y40 is the Proton donor of the active site. Residue H102 participates in substrate binding. NADP(+) is bound by residues Q175 and I246–N258.

This sequence belongs to the aldo/keto reductase family. In terms of assembly, monomer.

Its subcellular location is the cytoplasm. It carries out the reaction 1,5-anhydro-D-glucitol + NADP(+) = 1,5-anhydro-D-fructose + NADPH + H(+). Its activity is regulated as follows. Inhibited by p-chloromercuribenzoic acid and alkyliodines. In terms of biological role, catalyzes the NADPH-dependent reduction of 1,5-anhydro-D-fructose (AF) to 1,5-anhydro-D-glucitol. This chain is 1,5-anhydro-D-fructose reductase (Akr1e2), found in Mus musculus (Mouse).